Reading from the N-terminus, the 470-residue chain is 6-phospho-beta-galactosidase 1 (470 aa).

5 residues coordinate D-galactose 6-phosphate: Gln23, His120, Asn163, Glu164, and Asn300. Glu164 acts as the Proton donor in catalysis. Glu378 serves as the catalytic Nucleophile. Residues Ser434, Trp435, Lys441, and Tyr443 each contribute to the D-galactose 6-phosphate site.

It belongs to the glycosyl hydrolase 1 family.

The enzyme catalyses a 6-phospho-beta-D-galactoside + H2O = D-galactose 6-phosphate + an alcohol. It functions in the pathway carbohydrate metabolism; lactose degradation; D-galactose 6-phosphate and beta-D-glucose from lactose 6-phosphate: step 1/1. In Streptococcus pneumoniae serotype 4 (strain ATCC BAA-334 / TIGR4), this protein is 6-phospho-beta-galactosidase 1.